Consider the following 455-residue polypeptide: Ribulose bisphosphate carboxylase large chain (455 aa).

K5 bears the N6,N6,N6-trimethyllysine mark. Substrate contacts are provided by N114 and T164. K166 serves as the catalytic Proton acceptor. K168 contacts substrate. Positions 192, 194, and 195 each coordinate Mg(2+). N6-carboxylysine is present on K192. Catalysis depends on H285, which acts as the Proton acceptor. The substrate site is built by R286, H318, and S370.

The protein belongs to the RuBisCO large chain family. Type I subfamily. Heterohexadecamer of 8 large chains and 8 small chains. Mg(2+) is required as a cofactor.

Its subcellular location is the plastid. The protein localises to the chloroplast. The catalysed reaction is 2 (2R)-3-phosphoglycerate + 2 H(+) = D-ribulose 1,5-bisphosphate + CO2 + H2O. It carries out the reaction D-ribulose 1,5-bisphosphate + O2 = 2-phosphoglycolate + (2R)-3-phosphoglycerate + 2 H(+). Functionally, ruBisCO catalyzes two reactions: the carboxylation of D-ribulose 1,5-bisphosphate, the primary event in carbon dioxide fixation, as well as the oxidative fragmentation of the pentose substrate in the photorespiration process. Both reactions occur simultaneously and in competition at the same active site. In Tamarindus indica (Tamarind), this protein is Ribulose bisphosphate carboxylase large chain.